Reading from the N-terminus, the 275-residue chain is Polyamine aminopropyltransferase (275 aa).

The PABS domain maps to 2 to 235 (HLWFTEKQND…AMWSFTIGSK (234 aa)). Residue Gln31 participates in S-methyl-5'-thioadenosine binding. Spermidine is bound by residues His62 and Asp86. S-methyl-5'-thioadenosine-binding positions include Glu106 and 137 to 138 (DG). The active-site Proton acceptor is the Asp155. Residue 155 to 158 (DSTD) participates in spermidine binding. Position 162 (Pro162) interacts with S-methyl-5'-thioadenosine.

It belongs to the spermidine/spermine synthase family. As to quaternary structure, homodimer or homotetramer.

The protein resides in the cytoplasm. It catalyses the reaction S-adenosyl 3-(methylsulfanyl)propylamine + putrescine = S-methyl-5'-thioadenosine + spermidine + H(+). Its pathway is amine and polyamine biosynthesis; spermidine biosynthesis; spermidine from putrescine: step 1/1. Catalyzes the irreversible transfer of a propylamine group from the amino donor S-adenosylmethioninamine (decarboxy-AdoMet) to putrescine (1,4-diaminobutane) to yield spermidine. This chain is Polyamine aminopropyltransferase, found in Desulforudis audaxviator (strain MP104C).